The chain runs to 155 residues: MRKSAAPKRPVVQDPVYKSELVTQLVNKILIGGKKSTAERIVYGALEICREKTGTDPVGTLEKALGNVRPDLEVRSRRVGGATYQVPVDVRPERANTLALRWLVTFTRQRRENTMIERLANELLDAANGLGASVKRREDTHKMAEANRAFAHYRW.

This sequence belongs to the universal ribosomal protein uS7 family. As to quaternary structure, part of the 30S ribosomal subunit. Contacts proteins S9 and S11.

One of the primary rRNA binding proteins, it binds directly to 16S rRNA where it nucleates assembly of the head domain of the 30S subunit. Is located at the subunit interface close to the decoding center, probably blocks exit of the E-site tRNA. This is Small ribosomal subunit protein uS7 from Corynebacterium glutamicum (strain R).